The following is a 655-amino-acid chain: WD repeat-containing protein 70 (655 aa).

2 disordered regions span residues 1 to 24 (MEHS…LAVT) and 43 to 170 (FEQT…PIHR). Residues 45-78 (QTRRTAVERSRKTLEAREKEEEMNREKELRKQLE) are compositionally biased toward basic and acidic residues. Residues 99–112 (RDTSSSDSDHSSGS) show a composition bias toward low complexity. The span at 148 to 165 (EEGEDDDDDDLEDEGEED) shows a compositional bias: acidic residues. WD repeat units follow at residues 181–220 (HGTK…ASFK), 228–269 (CECH…ECIK), 282–322 (GHTA…KQKS), 331–370 (GKKV…HPKF), 377–416 (APGT…KPLF), 422–467 (PTLF…RVYE), and 470–509 (ITDA…QRGA). K297 is covalently cross-linked (Glycyl lysine isopeptide (Lys-Gly) (interchain with G-Cter in SUMO2)). At K453 the chain carries N6-acetyllysine. Residues 541–566 (REPRQRSTRKQLEKDRLDPLKSHKPE) show a composition bias toward basic and acidic residues. Residues 541 to 582 (REPRQRSTRKQLEKDRLDPLKSHKPEPPVAGPGRGGRVGTHG) form a disordered region. A compositionally biased stretch (gly residues) spans 572–582 (PGRGGRVGTHG). Residue T580 is modified to Phosphothreonine. Glycyl lysine isopeptide (Lys-Gly) (interchain with G-Cter in SUMO2) cross-links involve residues K591 and K597. Phosphoserine occurs at positions 622 and 639. The segment at 632–655 (TMFAQVESDDEESKNEPEWKKRKI) is disordered. The span at 645–655 (KNEPEWKKRKI) shows a compositional bias: basic and acidic residues.

It belongs to the WD repeat GAD-1 family.

This chain is WD repeat-containing protein 70 (Wdr70), found in Rattus norvegicus (Rat).